The sequence spans 450 residues: tRNA-2-methylthio-N(6)-dimethylallyladenosine synthase (450 aa).

Residues 2–119 (KKVFVKTYGC…LPDLIARRQR (118 aa)) enclose the MTTase N-terminal domain. [4Fe-4S] cluster contacts are provided by Cys11, Cys48, Cys82, Cys156, Cys160, and Cys163. Positions 142-375 (RVEGPSAFVS…QATIEENVQR (234 aa)) constitute a Radical SAM core domain. The 71-residue stretch at 378 to 448 (QNMVGTVQRI…PHSLRGEIVV (71 aa)) folds into the TRAM domain.

The protein belongs to the methylthiotransferase family. MiaB subfamily. In terms of assembly, monomer. [4Fe-4S] cluster serves as cofactor.

Its subcellular location is the cytoplasm. The enzyme catalyses N(6)-dimethylallyladenosine(37) in tRNA + (sulfur carrier)-SH + AH2 + 2 S-adenosyl-L-methionine = 2-methylsulfanyl-N(6)-dimethylallyladenosine(37) in tRNA + (sulfur carrier)-H + 5'-deoxyadenosine + L-methionine + A + S-adenosyl-L-homocysteine + 2 H(+). Catalyzes the methylthiolation of N6-(dimethylallyl)adenosine (i(6)A), leading to the formation of 2-methylthio-N6-(dimethylallyl)adenosine (ms(2)i(6)A) at position 37 in tRNAs that read codons beginning with uridine. The polypeptide is tRNA-2-methylthio-N(6)-dimethylallyladenosine synthase (Cupriavidus necator (strain ATCC 17699 / DSM 428 / KCTC 22496 / NCIMB 10442 / H16 / Stanier 337) (Ralstonia eutropha)).